Here is a 344-residue protein sequence, read N- to C-terminus: Methionine import ATP-binding protein MetN (344 aa).

The ABC transporter domain occupies 2–241 (IELQGLSQRF…PQHDVTRAMI (240 aa)). 38-45 (GRSGAGKS) serves as a coordination point for ATP.

It belongs to the ABC transporter superfamily. Methionine importer (TC 3.A.1.24) family. In terms of assembly, the complex is composed of two ATP-binding proteins (MetN), two transmembrane proteins (MetI) and a solute-binding protein (MetQ).

The protein localises to the cell inner membrane. The catalysed reaction is L-methionine(out) + ATP + H2O = L-methionine(in) + ADP + phosphate + H(+). It catalyses the reaction D-methionine(out) + ATP + H2O = D-methionine(in) + ADP + phosphate + H(+). Functionally, part of the ABC transporter complex MetNIQ involved in methionine import. Responsible for energy coupling to the transport system. This Cupriavidus necator (strain ATCC 17699 / DSM 428 / KCTC 22496 / NCIMB 10442 / H16 / Stanier 337) (Ralstonia eutropha) protein is Methionine import ATP-binding protein MetN.